Reading from the N-terminus, the 277-residue chain is Radial spoke head protein 9 homolog (277 aa).

Belongs to the flagellar radial spoke RSP9 family. As to quaternary structure, component of axonemal radial spoke complexes.

It is found in the cytoplasm. The protein resides in the cytoskeleton. Its subcellular location is the cilium axoneme. The protein localises to the flagellum axoneme. It localises to the cell projection. It is found in the kinocilium. Its function is as follows. Functions as part of axonemal radial spoke complexes that play an important part in the motility of sperm and cilia. Required for motility of olfactory and neural cilia and for the structural integrity of ciliary axonemes in both 9+0 and 9+2 motile cilia. Essential for both the radial spoke head assembly and the central pair microtubule stability in ependymal motile cilia. This Danio rerio (Zebrafish) protein is Radial spoke head protein 9 homolog (rsph9).